The chain runs to 164 residues: Transcription elongation factor GreA (164 aa).

The protein belongs to the GreA/GreB family.

Its function is as follows. Necessary for efficient RNA polymerase transcription elongation past template-encoded arresting sites. The arresting sites in DNA have the property of trapping a certain fraction of elongating RNA polymerases that pass through, resulting in locked ternary complexes. Cleavage of the nascent transcript by cleavage factors such as GreA or GreB allows the resumption of elongation from the new 3'terminus. GreA releases sequences of 2 to 3 nucleotides. In Helicobacter pylori (strain Shi470), this protein is Transcription elongation factor GreA.